A 124-amino-acid chain; its full sequence is Small ribosomal subunit protein uS12 (124 aa).

Residue Asp-89 is modified to 3-methylthioaspartic acid.

The protein belongs to the universal ribosomal protein uS12 family. Part of the 30S ribosomal subunit. Contacts proteins S8 and S17. May interact with IF1 in the 30S initiation complex.

In terms of biological role, with S4 and S5 plays an important role in translational accuracy. Functionally, interacts with and stabilizes bases of the 16S rRNA that are involved in tRNA selection in the A site and with the mRNA backbone. Located at the interface of the 30S and 50S subunits, it traverses the body of the 30S subunit contacting proteins on the other side and probably holding the rRNA structure together. The combined cluster of proteins S8, S12 and S17 appears to hold together the shoulder and platform of the 30S subunit. The protein is Small ribosomal subunit protein uS12 of Caldanaerobacter subterraneus subsp. tengcongensis (strain DSM 15242 / JCM 11007 / NBRC 100824 / MB4) (Thermoanaerobacter tengcongensis).